A 133-amino-acid chain; its full sequence is Nucleoid-associated protein Mb3743c (133 aa).

The tract at residues 98-133 (GAMRPPAPPAAPPGAPGMPGMPGMPGAPGAPPVPGI) is disordered. Over residues 102 to 113 (PPAPPAAPPGAP) the composition is skewed to pro residues.

It belongs to the YbaB/EbfC family. As to quaternary structure, homodimer.

Its subcellular location is the cytoplasm. It is found in the nucleoid. Its function is as follows. Binds to DNA and alters its conformation. May be involved in regulation of gene expression, nucleoid organization and DNA protection. The chain is Nucleoid-associated protein Mb3743c from Mycobacterium bovis (strain ATCC BAA-935 / AF2122/97).